The chain runs to 341 residues: Dimethylsulfoniopropionate lyase 7 (341 aa).

Composition is skewed to basic and acidic residues over residues 1–10 (MAGKDRKTIE) and 319–328 (ERKLAKDRQK). 2 disordered regions span residues 1-24 (MAGK…GGRF) and 319-341 (ERKL…AFDA).

This sequence belongs to the aspartate/glutamate racemases family. ALMA1 subfamily. As to quaternary structure, homotetramer.

The catalysed reaction is S,S-dimethyl-beta-propiothetin = acrylate + dimethyl sulfide + H(+). Its function is as follows. Mediates cleavage of dimethylsulfoniopropionate (DMSP) into dimethyl sulfide (DMS) and acrylate. DMS is the principal form by which sulfur is transported from oceans to the atmosphere and is a key component of the ocean sulfur cycle. This is Dimethylsulfoniopropionate lyase 7 from Emiliania huxleyi (strain CCMP1516).